The sequence spans 116 residues: Ribosome-binding factor A (116 aa).

This sequence belongs to the RbfA family. Monomer. Binds 30S ribosomal subunits, but not 50S ribosomal subunits or 70S ribosomes.

The protein resides in the cytoplasm. In terms of biological role, one of several proteins that assist in the late maturation steps of the functional core of the 30S ribosomal subunit. Associates with free 30S ribosomal subunits (but not with 30S subunits that are part of 70S ribosomes or polysomes). Required for efficient processing of 16S rRNA. May interact with the 5'-terminal helix region of 16S rRNA. The sequence is that of Ribosome-binding factor A from Malacoplasma penetrans (strain HF-2) (Mycoplasma penetrans).